We begin with the raw amino-acid sequence, 696 residues long: Glycine--tRNA ligase beta subunit (696 aa).

Belongs to the class-II aminoacyl-tRNA synthetase family. Tetramer of two alpha and two beta subunits.

The protein localises to the cytoplasm. It carries out the reaction tRNA(Gly) + glycine + ATP = glycyl-tRNA(Gly) + AMP + diphosphate. In Methylorubrum extorquens (strain CM4 / NCIMB 13688) (Methylobacterium extorquens), this protein is Glycine--tRNA ligase beta subunit.